A 523-amino-acid polypeptide reads, in one-letter code: GMP synthase [glutamine-hydrolyzing] (523 aa).

Residues 8 to 205 (KILILDFGSQ…VVNICGCETK (198 aa)) enclose the Glutamine amidotransferase type-1 domain. C85 serves as the catalytic Nucleophile. Catalysis depends on residues H179 and E181. The GMPS ATP-PPase domain occupies 206-398 (WTAENIIEDA…LGLPAEMINR (193 aa)). 233–239 (SGGVDSS) contacts ATP.

As to quaternary structure, homodimer.

The catalysed reaction is XMP + L-glutamine + ATP + H2O = GMP + L-glutamate + AMP + diphosphate + 2 H(+). Its pathway is purine metabolism; GMP biosynthesis; GMP from XMP (L-Gln route): step 1/1. Functionally, catalyzes the synthesis of GMP from XMP. The sequence is that of GMP synthase [glutamine-hydrolyzing] from Haemophilus influenzae (strain 86-028NP).